We begin with the raw amino-acid sequence, 364 residues long: MASPNPYSYSPQLPQREESPYQEDQYQSSPSFRSTPFRSSRGTGAGTGIGLGLSSGFTSSLRGGAGGPSEPRSGDGSHDDLPQRSSSSSTVIPSLPPKPKPSSIPETLWSLQIPLHITHQSHPKTPYICSVPRFSYLALLLPRLTAYYGTPCSSFHHEEVHLRNFAVGLLVDLYQPSELPWRLTVADGMEWDICDTFMNSAKEADFIRNGNAKRIMGLSKEHTTALWNAVQDNDYQAFTKINTHLLNAPTALKNVPIRIYIPSSPSPPSSDQQQPQRPGGSSSSGSYRVMQTLVPPRGPNNRTPQTLGQALKSLLPALFPSSRDPVLASVILHGAPVPFSAPLEELMRDASYPDGWLCLIVVLL.

Polar residues predominate over residues 1 to 13 (MASPNPYSYSPQL). A disordered region spans residues 1–103 (MASPNPYSYS…SLPPKPKPSS (103 aa)). The span at 28–42 (SSPSFRSTPFRSSRG) shows a compositional bias: low complexity. Gly residues predominate over residues 43-53 (TGAGTGIGLGL). Over residues 72-82 (RSGDGSHDDLP) the composition is skewed to basic and acidic residues. Residue K202 forms a Glycyl lysine isopeptide (Lys-Gly) (interchain with G-Cter in ATG12) linkage. A disordered region spans residues 262–306 (PSSPSPPSSDQQQPQRPGGSSSSGSYRVMQTLVPPRGPNNRTPQT). A compositionally biased stretch (low complexity) spans 269–286 (SSDQQQPQRPGGSSSSGS).

Belongs to the ATG5 family. As to quaternary structure, conjugated with atg12. In terms of processing, conjugated to atg12; which is essential for autophagy.

It is found in the preautophagosomal structure membrane. Its function is as follows. Involved in cytoplasm to vacuole transport (Cvt) and autophagic vesicle formation. Autophagy is essential for maintenance of amino acid levels and protein synthesis under nitrogen starvation. Required for selective autophagic degradation of the nucleus (nucleophagy). Also required for mitophagy, which eliminates defective or superfluous mitochondria in order to fulfill cellular energy requirements and prevent excess ROS production. Conjugation with atg12, through a ubiquitin-like conjugating system involving apg-5/atg7 as an E1-like activating enzyme and atg10 as an E2-like conjugating enzyme, is essential for its function. The atg12-apg-4/atg5 conjugate acts as an E3-like enzyme which is required for lipidation of apg-6/atg8 and apg-6/atg8 association to the vesicle membranes. The chain is Autophagy-related protein 5 (apg-4) from Neurospora crassa (strain ATCC 24698 / 74-OR23-1A / CBS 708.71 / DSM 1257 / FGSC 987).